Reading from the N-terminus, the 147-residue chain is Prefoldin subunit alpha (147 aa).

The protein belongs to the prefoldin alpha subunit family. Heterohexamer of two alpha and four beta subunits.

It localises to the cytoplasm. Functionally, molecular chaperone capable of stabilizing a range of proteins. Seems to fulfill an ATP-independent, HSP70-like function in archaeal de novo protein folding. The sequence is that of Prefoldin subunit alpha from Thermococcus onnurineus (strain NA1).